A 211-amino-acid polypeptide reads, in one-letter code: Stromal cell-derived factor 2 (211 aa).

Residues 1–18 form the signal peptide; sequence MAVVSLLLFGGLWSAVGS. 3 consecutive MIR domains span residues 21–75, 83–138, and 139–193; these read LAVV…IRGK, GTPI…VLCN, and GPYW…AMEG.

The protein resides in the secreted. This is Stromal cell-derived factor 2 (SDF2) from Bos taurus (Bovine).